The chain runs to 201 residues: Pyridoxine/pyridoxamine 5'-phosphate oxidase (201 aa).

FMN is bound by residues 49-54 (RMVLLK), 64-65 (YT), Lys-71, and Gln-93. Lys-54 contributes to the substrate binding site. Tyr-111, Arg-115, and Ser-119 together coordinate substrate. Residues 128–129 (QS) and Trp-172 contribute to the FMN site. 178–180 (RLH) is a binding site for substrate. Residue Arg-182 participates in FMN binding.

This sequence belongs to the pyridoxamine 5'-phosphate oxidase family. Homodimer. Requires FMN as cofactor.

It carries out the reaction pyridoxamine 5'-phosphate + O2 + H2O = pyridoxal 5'-phosphate + H2O2 + NH4(+). It catalyses the reaction pyridoxine 5'-phosphate + O2 = pyridoxal 5'-phosphate + H2O2. It participates in cofactor metabolism; pyridoxal 5'-phosphate salvage; pyridoxal 5'-phosphate from pyridoxamine 5'-phosphate: step 1/1. The protein operates within cofactor metabolism; pyridoxal 5'-phosphate salvage; pyridoxal 5'-phosphate from pyridoxine 5'-phosphate: step 1/1. Functionally, catalyzes the oxidation of either pyridoxine 5'-phosphate (PNP) or pyridoxamine 5'-phosphate (PMP) into pyridoxal 5'-phosphate (PLP). The chain is Pyridoxine/pyridoxamine 5'-phosphate oxidase from Roseobacter denitrificans (strain ATCC 33942 / OCh 114) (Erythrobacter sp. (strain OCh 114)).